We begin with the raw amino-acid sequence, 309 residues long: Malate dehydrogenase (309 aa).

NAD(+)-binding positions include 8–13 (GAGLVG) and Asp33. Positions 82 and 88 each coordinate substrate. Residues Asn95 and 118 to 120 (VSN) each bind NAD(+). Substrate-binding residues include Asn120 and Arg151. His175 serves as the catalytic Proton acceptor.

Belongs to the LDH/MDH superfamily. MDH type 3 family.

The catalysed reaction is (S)-malate + NAD(+) = oxaloacetate + NADH + H(+). In terms of biological role, catalyzes the reversible oxidation of malate to oxaloacetate. In Pseudomonas putida (strain ATCC 700007 / DSM 6899 / JCM 31910 / BCRC 17059 / LMG 24140 / F1), this protein is Malate dehydrogenase.